Consider the following 497-residue polypeptide: ADP-dependent glucokinase (497 aa).

The N-terminal stretch at 1–22 is a signal peptide; it reads MALWRGSAYAGFLALAVGCVFL. In terms of domain architecture, ADPK spans 52–497; the sequence is SPEGRLAAAW…LFYSEVHPHY (446 aa). Mg(2+) contacts are provided by Glu297, Glu328, and Asp481. Catalysis depends on Asp481, which acts as the Proton acceptor.

This sequence belongs to the ADP-dependent glucokinase family. Monomer. Requires Mg(2+) as cofactor.

It localises to the secreted. The enzyme catalyses D-glucose + ADP = D-glucose 6-phosphate + AMP + H(+). It functions in the pathway carbohydrate degradation; glycolysis. In terms of biological role, catalyzes the phosphorylation of D-glucose to D-glucose 6-phosphate using ADP as the phosphate donor. GDP and CDP can replace ADP, but with reduced efficiency. This Homo sapiens (Human) protein is ADP-dependent glucokinase (ADPGK).